We begin with the raw amino-acid sequence, 109 residues long: MKLSIIIIATSLVIAVVAFPSKDSKAIENDKTEQRMEIVVQETARACSKQIGDKCKRNCECCRKTVVCGTIYVGGKEVNQCMDKTSDNAILNGLGKGMNFIENTFSFCV.

The first 18 residues, 1 to 18, serve as a signal peptide directing secretion; sequence MKLSIIIIATSLVIAVVA. Positions 19–46 are excised as a propeptide; that stretch reads FPSKDSKAIENDKTEQRMEIVVQETARA. 4 disulfide bridges follow: Cys47–Cys62, Cys55–Cys68, Cys59–Cys108, and Cys61–Cys81.

The protein belongs to the neurotoxin 25 family. F7 subfamily. In terms of tissue distribution, expressed by the venom gland.

The protein localises to the secreted. In terms of biological role, putative ion channel inhibitor. The chain is Hainantoxin-XVIII-3 from Cyriopagopus hainanus (Chinese bird spider).